We begin with the raw amino-acid sequence, 372 residues long: Cobalt-precorrin-5B C(1)-methyltransferase (372 aa).

This sequence belongs to the CbiD family.

It catalyses the reaction Co-precorrin-5B + S-adenosyl-L-methionine = Co-precorrin-6A + S-adenosyl-L-homocysteine. Its pathway is cofactor biosynthesis; adenosylcobalamin biosynthesis; cob(II)yrinate a,c-diamide from sirohydrochlorin (anaerobic route): step 6/10. Its function is as follows. Catalyzes the methylation of C-1 in cobalt-precorrin-5B to form cobalt-precorrin-6A. The chain is Cobalt-precorrin-5B C(1)-methyltransferase from Prochlorococcus marinus (strain MIT 9515).